The chain runs to 317 residues: Probable cell division protein WhiA (317 aa).

Residues 278-311 constitute a DNA-binding region (H-T-H motif); the sequence is SLQGLGELLDPQVGKSGVNHRLRKIGEKADELRQ.

The protein belongs to the WhiA family.

Involved in cell division and chromosome segregation. The sequence is that of Probable cell division protein WhiA from Lachnospira eligens (strain ATCC 27750 / DSM 3376 / VPI C15-48 / C15-B4) (Eubacterium eligens).